Reading from the N-terminus, the 144-residue chain is MTRKQKRLAVIGSGMGFLALAAALTFYALGQQTSYFYMPSDLLSQPAAAQERIRLGGLVQQGSVERGQGTHVSFVVADGQNGVPVVYDGILPDLFREEQGVVIEGRMGPDGVFVADTVLAKHDETYMPREVADRLKKDGLWQEQ.

The Cytoplasmic segment spans residues Met1–Arg7. Residues Leu8–Ala28 traverse the membrane as a helical; Signal-anchor for type II membrane protein segment. The Periplasmic segment spans residues Leu29–Gln144. Heme contacts are provided by His122 and Tyr126.

This sequence belongs to the CcmE/CycJ family.

It is found in the cell inner membrane. Its function is as follows. Heme chaperone required for the biogenesis of c-type cytochromes. Transiently binds heme delivered by CcmC and transfers the heme to apo-cytochromes in a process facilitated by CcmF and CcmH. This is Cytochrome c-type biogenesis protein CcmE from Chelativorans sp. (strain BNC1).